Here is a 165-residue protein sequence, read N- to C-terminus: Aspartate carbamoyltransferase regulatory chain (165 aa).

4 residues coordinate Zn(2+): C121, C126, C149, and C152.

It belongs to the PyrI family. In terms of assembly, contains catalytic and regulatory chains. Requires Zn(2+) as cofactor.

In terms of biological role, involved in allosteric regulation of aspartate carbamoyltransferase. This is Aspartate carbamoyltransferase regulatory chain from Methanoregula boonei (strain DSM 21154 / JCM 14090 / 6A8).